Here is an 89-residue protein sequence, read N- to C-terminus: Small ribosomal subunit protein uS15 (89 aa).

The protein belongs to the universal ribosomal protein uS15 family. In terms of assembly, part of the 30S ribosomal subunit. Forms a bridge to the 50S subunit in the 70S ribosome, contacting the 23S rRNA.

Functionally, one of the primary rRNA binding proteins, it binds directly to 16S rRNA where it helps nucleate assembly of the platform of the 30S subunit by binding and bridging several RNA helices of the 16S rRNA. Its function is as follows. Forms an intersubunit bridge (bridge B4) with the 23S rRNA of the 50S subunit in the ribosome. The protein is Small ribosomal subunit protein uS15 of Rhizobium etli (strain CIAT 652).